Here is a 107-residue protein sequence, read N- to C-terminus: SH3 domain-binding glutamic acid-rich-like protein 2 (107 aa).

Residues 61 to 67 (QGNPLPP) carry the SH3-binding motif.

Belongs to the SH3BGR family. Highly expressed in brain, placenta, liver and kidney. Expressed in retina.

It localises to the nucleus. This is SH3 domain-binding glutamic acid-rich-like protein 2 (SH3BGRL2) from Homo sapiens (Human).